Reading from the N-terminus, the 162-residue chain is Phycoerythrocyanin alpha chain (162 aa).

Cysteine 84 is a (15Z)-phycoviolobilin binding site.

Belongs to the phycobiliprotein family. In terms of assembly, heterodimer of an alpha and a beta chain. In terms of processing, contains one covalently linked bilin chromophore.

Its subcellular location is the cellular thylakoid membrane. In terms of biological role, light-harvesting photosynthetic bile pigment-protein from the phycobiliprotein complex. The sequence is that of Phycoerythrocyanin alpha chain (pecA) from Nostoc sp. (strain PCC 7120 / SAG 25.82 / UTEX 2576).